The chain runs to 215 residues: LexA repressor (215 aa).

The segment at residues Arg28–Arg48 is a DNA-binding region (H-T-H motif). Catalysis depends on for autocatalytic cleavage activity residues Ser133 and Lys170.

It belongs to the peptidase S24 family. Homodimer.

The catalysed reaction is Hydrolysis of Ala-|-Gly bond in repressor LexA.. Its function is as follows. Represses a number of genes involved in the response to DNA damage (SOS response), including recA and lexA. In the presence of single-stranded DNA, RecA interacts with LexA causing an autocatalytic cleavage which disrupts the DNA-binding part of LexA, leading to derepression of the SOS regulon and eventually DNA repair. The chain is LexA repressor from Burkholderia ambifaria (strain MC40-6).